The primary structure comprises 293 residues: Fructose-bisphosphate aldolase (293 aa).

Ser-50 is a D-glyceraldehyde 3-phosphate binding site. Residue Asp-85 is the Proton donor of the active site. 4 residues coordinate Zn(2+): His-86, Asp-106, Glu-136, and His-178. Dihydroxyacetone phosphate is bound at residue Gly-179. Residue His-208 coordinates Zn(2+). Dihydroxyacetone phosphate-binding positions include 209-211 (GGS) and 230-233 (NVNT).

It belongs to the class II fructose-bisphosphate aldolase family. The cofactor is Zn(2+).

The enzyme catalyses beta-D-fructose 1,6-bisphosphate = D-glyceraldehyde 3-phosphate + dihydroxyacetone phosphate. It functions in the pathway carbohydrate degradation; glycolysis; D-glyceraldehyde 3-phosphate and glycerone phosphate from D-glucose: step 4/4. Catalyzes the aldol condensation of dihydroxyacetone phosphate (DHAP or glycerone-phosphate) with glyceraldehyde 3-phosphate (G3P) to form fructose 1,6-bisphosphate (FBP) in gluconeogenesis and the reverse reaction in glycolysis. The protein is Fructose-bisphosphate aldolase (fba) of Streptococcus pneumoniae serotype 4 (strain ATCC BAA-334 / TIGR4).